We begin with the raw amino-acid sequence, 620 residues long: tRNA uridine 5-carboxymethylaminomethyl modification enzyme MnmG (620 aa).

FAD-binding positions include 13-18 (GGGHAG), valine 125, and serine 182. 280 to 294 (GPRYCPSVEDKIVKF) lines the NAD(+) pocket. Asparagine 377 is an FAD binding site.

The protein belongs to the MnmG family. Homodimer. Heterotetramer of two MnmE and two MnmG subunits. FAD is required as a cofactor.

Its subcellular location is the cytoplasm. In terms of biological role, NAD-binding protein involved in the addition of a carboxymethylaminomethyl (cmnm) group at the wobble position (U34) of certain tRNAs, forming tRNA-cmnm(5)s(2)U34. The chain is tRNA uridine 5-carboxymethylaminomethyl modification enzyme MnmG from Sulfurihydrogenibium sp. (strain YO3AOP1).